The primary structure comprises 457 residues: B-cell linker protein (457 aa).

Residues 38–306 (KLKVKGPPSV…FPPTQKPVLQ (269 aa)) are disordered. Positions 57–74 (PADEEEQWSDDFDSDYEN) are enriched in acidic residues. Phosphotyrosine; by SYK is present on residues Y72, Y84, Y96, Y178, and Y189. Acidic residues predominate over residues 172-187 (LEDEADYVVPVEDNDE). Composition is skewed to polar residues over residues 206–218 (VNRS…SSKH) and 256–270 (PLKT…NASN). The span at 272–290 (CEEKPVPAERHRGSSHRQD) shows a compositional bias: basic and acidic residues. Positions 347–454 (WYAGACDRKS…KDSTRLKYAV (108 aa)) constitute an SH2 domain.

As to quaternary structure, associates with PLCG1, VAV1 and NCK1 in a B-cell antigen receptor-dependent fashion. Interacts with VAV3, PLCG2 and GRB2. Interacts through its SH2 domain with CD79A. Interacts (via SH2 domain) with SYK; phosphorylated and activated by SYK. Interacts (via SH2 domain) with SCIMP; this interaction is dependent on phosphorylation of SCIMP 'Tyr-120'. Following BCR activation, phosphorylated on tyrosine residues by SYK and LYN. When phosphorylated, serves as a scaffold to assemble downstream targets of antigen activation, including PLCG1, VAV1, GRB2 and NCK1. Phosphorylation of Tyr-84, Tyr-178 and Tyr-189 facilitates PLCG1 binding. Phosphorylation of Tyr-96 facilitates BTK binding. Phosphorylation of Tyr-72 facilitates VAV1 and NCK1 binding. Phosphorylation is required for both Ca(2+) and MAPK signaling pathways.

It is found in the cytoplasm. The protein resides in the cell membrane. Functions as a central linker protein, downstream of the B-cell receptor (BCR), bridging the SYK kinase to a multitude of signaling pathways and regulating biological outcomes of B-cell function and development. Plays a role in the activation of ERK/EPHB2, MAP kinase p38 and JNK. Modulates AP1 activation. Important for the activation of NF-kappa-B and NFAT. Plays an important role in BCR-mediated PLCG1 and PLCG2 activation and Ca(2+) mobilization and is required for trafficking of the BCR to late endosomes. However, does not seem to be required for pre-BCR-mediated activation of MAP kinase and phosphatidyl-inositol 3 (PI3) kinase signaling. May be required for the RAC1-JNK pathway. Plays a critical role in orchestrating the pro-B cell to pre-B cell transition. May play an important role in BCR-induced B-cell apoptosis. The protein is B-cell linker protein (Blnk) of Rattus norvegicus (Rat).